Reading from the N-terminus, the 405-residue chain is Multidrug resistance protein MdtA (405 aa).

A signal peptide spans 1–22; the sequence is MKTPRRFPLIALTVAAVLTAAA. Residues 35-52 are compositionally biased toward polar residues; that stretch reads VQNRQGTEQQRASNSQGS. The tract at residues 35–62 is disordered; the sequence is VQNRQGTEQQRASNSQGSAKRAGNAPPV.

It belongs to the membrane fusion protein (MFP) (TC 8.A.1) family. In terms of assembly, part of a tripartite efflux system composed of MdtA, MdtB and MdtC.

It is found in the cell inner membrane. This is Multidrug resistance protein MdtA from Erwinia amylovora (strain ATCC 49946 / CCPPB 0273 / Ea273 / 27-3).